The following is a 24-amino-acid chain: Transaldolase (24 aa).

This sequence belongs to the transaldolase family.

The protein localises to the cytoplasm. It carries out the reaction D-sedoheptulose 7-phosphate + D-glyceraldehyde 3-phosphate = D-erythrose 4-phosphate + beta-D-fructose 6-phosphate. It participates in carbohydrate degradation; pentose phosphate pathway; D-glyceraldehyde 3-phosphate and beta-D-fructose 6-phosphate from D-ribose 5-phosphate and D-xylulose 5-phosphate (non-oxidative stage): step 2/3. Its function is as follows. Transaldolase is important for the balance of metabolites in the pentose-phosphate pathway. In Capsicum annuum var. annuum (Red pepper), this protein is Transaldolase.